A 423-amino-acid chain; its full sequence is MKEIISRHKAGEQIGICSVCSAHPLVIESALRFDLNSGNKVLIEATSNQVNQFGGYTGMKPADFRDFVYGIAQEVGFPRERLILGGDHLGPNCWQNEPAAAAMEKSVELIKAYVAAGFSKIHLDASMSCADDPTPLDPMVVARRAAVLCKAAEETANEEQKCHLTYVIGTEVPVPGGEASTIGSVHVTREVDAARTLETHQIAFRESGLEEALSRVIAIVVQPGVEFDHTQIIHYQPQAAQALSAWIKETPMVYEAHSTDYQTRQAYRALVRDHYAILKVGPALTFALREAIFALAQMENELISPEQRSRVLEVIDEVMLNEPGYWKKYYRPTWSQAMVDIHFSLSDRIRYYWPHPRIRQSVEKLIANLNNVTLPLGLISQFMPVQFERLSEGVLTPTPHNLIIDKIQDVLRAYRFGCTPDVA.

It belongs to the GatZ/KbaZ family. GatZ subfamily. Forms a complex with GatY.

Its pathway is carbohydrate metabolism; D-tagatose 6-phosphate degradation; D-glyceraldehyde 3-phosphate and glycerone phosphate from D-tagatose 6-phosphate: step 2/2. Its function is as follows. Component of the tagatose-1,6-bisphosphate aldolase GatYZ that is required for full activity and stability of the Y subunit. Could have a chaperone-like function for the proper and stable folding of GatY. When expressed alone, GatZ does not show any aldolase activity. Is involved in the catabolism of galactitol. In Salmonella heidelberg (strain SL476), this protein is D-tagatose-1,6-bisphosphate aldolase subunit GatZ.